The chain runs to 421 residues: Stemmadenine O-acetyltransferase (421 aa).

Residues M1–Q21 form a disordered region. Residues H160 and D362 each act as proton acceptor in the active site.

This sequence belongs to the plant acyltransferase family. In terms of assembly, monomer. Expressed in leaf epidermis.

The catalysed reaction is 15alpha-stemmadenine + acetyl-CoA = O-acetyl-15alpha-stemmadenine + CoA. Its pathway is alkaloid biosynthesis. In terms of biological role, component of iboga and aspidosperma monoterpenoid indole alkaloids (MIAs, e.g. tabersonine and catharanthine) biosynthesis pathway from 19E-geissoschizine. Acetyltransferase that catalyzes the formation of O-acetylstemmadenine from stemmadenine. The sequence is that of Stemmadenine O-acetyltransferase from Catharanthus roseus (Madagascar periwinkle).